Here is a 254-residue protein sequence, read N- to C-terminus: Gamma-glutamyl-gamma-aminobutyrate hydrolase (254 aa).

Positions 16 to 250 (RNRLKGHATQ…ITAWQHHIAE (235 aa)) constitute a Glutamine amidotransferase type-1 domain. Residue cysteine 114 is the Nucleophile of the active site. Active-site residues include histidine 222 and glutamate 224.

Belongs to the peptidase C26 family.

It catalyses the reaction 4-(gamma-L-glutamylamino)butanoate + H2O = 4-aminobutanoate + L-glutamate. Its pathway is amine and polyamine degradation; putrescine degradation; 4-aminobutanoate from putrescine: step 4/4. Involved in the breakdown of putrescine via hydrolysis of the gamma-glutamyl linkage of gamma-glutamyl-gamma-aminobutyrate. In Shigella flexneri, this protein is Gamma-glutamyl-gamma-aminobutyrate hydrolase (puuD).